The following is a 325-amino-acid chain: MTLTQEKRSYMEKLSDENGIISALAFDQRGALKRLMAQYQTQEPTIAQMEELKVLVAEELTPYASSMLLDPEYGLPAAKHLDKNAGLLLAYEKTGYDTTSTKRLPDCLVEWSAKRLKKQGADAVKFLLYYDVDGDEEVNQQKQAYIERIGSECKAEDIPFFLEILAYDETITDAASVEYAKVKPHKVLDAMKVFSDERFGIDVLKVEVPVNMKYVEGFGDGPIVHTQDQAANFFKQQDQATPLPYIYLSAGVSAKLFQDTLVFAKESGANFNGVLCGRATWAGSVKDYIEKGEAAARQWLRTEGFKNIDELNKVLKATATSWKER.

It belongs to the aldolase LacD family.

The enzyme catalyses D-tagatofuranose 1,6-bisphosphate = D-glyceraldehyde 3-phosphate + dihydroxyacetone phosphate. It functions in the pathway carbohydrate metabolism; D-tagatose 6-phosphate degradation; D-glyceraldehyde 3-phosphate and glycerone phosphate from D-tagatose 6-phosphate: step 2/2. The protein is Tagatose 1,6-diphosphate aldolase 1 (lacD1) of Streptococcus mutans serotype c (strain ATCC 700610 / UA159).